Consider the following 222-residue polypeptide: UPF0585 protein CG18661 (222 aa).

It belongs to the UPF0585 family.

In Drosophila melanogaster (Fruit fly), this protein is UPF0585 protein CG18661.